Here is a 255-residue protein sequence, read N- to C-terminus: Tumor necrosis factor receptor superfamily member 9 (255 aa).

Positions 1–23 are cleaved as a signal peptide; that stretch reads MGNSCYNIVATLLLVLNFERTRS. TNFR-Cys repeat units lie at residues 24–45, 47–86, 87–118, and 119–159; these read LQDP…NQIC, PCPP…NAEC, DCTP…KGCK, and DCCF…VVCG. At 24 to 186 the chain is on the extracellular side; it reads LQDPCSNCPA…PAREPGHSPQ (163 aa). Intrachain disulfides connect Cys-28–Cys-37, Cys-31–Cys-45, Cys-48–Cys-62, Cys-65–Cys-78, Cys-68–Cys-86, Cys-88–Cys-94, Cys-99–Cys-106, Cys-102–Cys-117, and Cys-121–Cys-133. Residues Asn-138 and Asn-149 are each glycosylated (N-linked (GlcNAc...) asparagine). Cys-139 and Cys-158 are joined by a disulfide. The interval 161 to 180 is disordered; that stretch reads SPADLSPGASSVTPPAPARE. The chain crosses the membrane as a helical span at residues 187-213; sequence IISFFLALTSTALLFLLFFLTLRFSVV. At 214–255 the chain is on the cytoplasmic side; it reads KRGRKKLLYIFKQPFMRPVQTTQEEDGCSCRFPEEEEGGCEL. Positions 214-255 are interaction with LRR-1; that stretch reads KRGRKKLLYIFKQPFMRPVQTTQEEDGCSCRFPEEEEGGCEL.

In terms of assembly, predominantly homodimeric, but may also exist as a monomer. Interacts with TRAF1, TRAF2 and TRAF3. Interacts with LRR-repeat protein 1/LRR-1. Expressed on the surface of activated T-cells.

It is found in the cell membrane. Its function is as follows. Receptor for TNFSF9/4-1BBL. Conveys a signal that enhances CD8(+) T-cell survival, cytotoxicity, and mitochondrial activity, thereby promoting immunity against viruses and tumors. The protein is Tumor necrosis factor receptor superfamily member 9 (TNFRSF9) of Homo sapiens (Human).